The primary structure comprises 827 residues: MESSSRIFVKNLPPTITEAEFRKHFSAEGRQVTDVKLIPARHIGFVGYKSAEDAARAVKYFNRSFIRMSRISVDIAKPIADSKPQHKSPSKGSSKDADPKNAPKVLPPNTKVTAAAVPKVEAAPDAPKRKLDVLDEADPKLQEYLDVMGAHPSKKMRNAEGLPTTVDEVLAPAVPAGLEDGESDDEYEDIPSRTHNQSHTADQEMVDAPLAASAEPSESAPPVSLDATDDDWLRSRTNRLLDLVDPEDAAFALRPAASGSAAVSVPSTSVENTASAKPEEHPAEDSREMAATSTHDPESAISLIEKTSRLFLRNLSYTVTEDDVREHFAKFGILVEVHVPLDSKGHSKGFAMIRYEKPASALAAFQTDGTVFQGRIVHILPAAAKRENKLDEFALSKLPLKKQQLLRKKAEAASSTFNWNSLFMSQDAVNTAMAERLGVSKAELLDPTDASAAVKQAVAETTVIQEAKQYFAANGVNIEAFKTQQRGDTTILVKNIKNTTIEELRTLFEEHGTVLRVLMPPSGTIAIVQFAQPVQCRTAFARKAYSRFKDSVLFLEKGPKGLFTDNVAVPTDARPAGVQKPSVADLLERDDAEEQLETSSLFVRNLNFSTTSQGLTDAFKHLDGFVQAKVKTKTDPKKPGQVLSMGFGFVAFRTKDQAQAALKVMDGQVLDAHKISVKASHRGLDAAEERRREDMAKKAANQGTKLVVKNLPFEVTKKEVRTLFSAYGKLVALRIPKKFNQSSRGFAFAEFSTAKEALNAFNSLKDTHILGRRLVIDFAQAEDIDPEDQIAAMEKKTRAQVNKVALQQLTGTGRAKVTIGDNDEDEV.

An RRM 1 domain is found at 5-78; sequence SRIFVKNLPP…SRISVDIAKP (74 aa). 3 disordered regions span residues 77-116, 176-230, and 256-299; these read KPIADSKPQHKSPSKGSSKDADPKNAPKVLPPNTKVTAAA, AGLE…ATDD, and AASG…DPES. A compositionally biased stretch (acidic residues) spans 179–189; that stretch reads EDGESDDEYED. Composition is skewed to low complexity over residues 208–225 and 256–270; these read APLAASAEPSESAPPVSL and AASGSAAVSVPSTSV. The span at 277–288 shows a compositional bias: basic and acidic residues; it reads KPEEHPAEDSRE. RRM domains are found at residues 308 to 384, 489 to 560, 599 to 682, and 704 to 781; these read SRLF…PAAA, TTIL…KGPK, SSLF…ASHR, and TKLV…FAQA.

The protein belongs to the RRM MRD1 family.

The protein localises to the nucleus. Its function is as follows. Involved in pre-rRNA processing. The chain is Multiple RNA-binding domain-containing protein 1 (mrd-1) from Neurospora crassa (strain ATCC 24698 / 74-OR23-1A / CBS 708.71 / DSM 1257 / FGSC 987).